Consider the following 247-residue polypeptide: Dynein axonemal assembly factor 19 (247 aa).

A coiled-coil region spans residues 12–32 (LEKELHSALQADRKYQRENDA).

This sequence belongs to the DNAAF19/PR46b family. In terms of assembly, homodimer. Expressed in all cells bearing motile cilia.

Its subcellular location is the cytoplasm. The protein localises to the cell projection. It localises to the cilium. It is found in the flagellum. Its function is as follows. Dynein-attachment factor required for cilia motility. This chain is Dynein axonemal assembly factor 19 (dnaaf19), found in Danio rerio (Zebrafish).